The sequence spans 555 residues: Pyrophosphate--fructose 6-phosphate 1-phosphotransferase (555 aa).

A diphosphate-binding site is contributed by glycine 82. A substrate-binding site is contributed by arginine 146. Aspartate 176 lines the Mg(2+) pocket. Residues 204 to 206, 243 to 244, 251 to 253, glutamate 312, and 428 to 431 each bind substrate; these read TID, KY, MGR, and YEGR. Aspartate 206 acts as the Proton acceptor in catalysis.

Belongs to the phosphofructokinase type A (PFKA) family. PPi-dependent PFK group II subfamily. Clade 'Long' sub-subfamily. In terms of assembly, homodimer. The cofactor is Mg(2+).

It is found in the cytoplasm. The enzyme catalyses beta-D-fructose 6-phosphate + diphosphate = beta-D-fructose 1,6-bisphosphate + phosphate + H(+). It participates in carbohydrate degradation; glycolysis; D-glyceraldehyde 3-phosphate and glycerone phosphate from D-glucose: step 3/4. Non-allosteric. In terms of biological role, catalyzes the phosphorylation of D-fructose 6-phosphate, the first committing step of glycolysis. Uses inorganic phosphate (PPi) as phosphoryl donor instead of ATP like common ATP-dependent phosphofructokinases (ATP-PFKs), which renders the reaction reversible, and can thus function both in glycolysis and gluconeogenesis. Consistently, PPi-PFK can replace the enzymes of both the forward (ATP-PFK) and reverse (fructose-bisphosphatase (FBPase)) reactions. The polypeptide is Pyrophosphate--fructose 6-phosphate 1-phosphotransferase (Borreliella burgdorferi (strain ATCC 35210 / DSM 4680 / CIP 102532 / B31) (Borrelia burgdorferi)).